A 272-amino-acid polypeptide reads, in one-letter code: D-aminoacyl-tRNA deacylase (272 aa).

Belongs to the DtdA deacylase family. In terms of assembly, monomer. It depends on Zn(2+) as a cofactor.

The catalysed reaction is a D-aminoacyl-tRNA + H2O = a tRNA + a D-alpha-amino acid + H(+). It catalyses the reaction glycyl-tRNA(Ala) + H2O = tRNA(Ala) + glycine + H(+). D-aminoacyl-tRNA deacylase with broad substrate specificity. By recycling D-aminoacyl-tRNA to D-amino acids and free tRNA molecules, this enzyme counteracts the toxicity associated with the formation of D-aminoacyl-tRNA entities in vivo. The sequence is that of D-aminoacyl-tRNA deacylase from Desulfurococcus amylolyticus (strain DSM 18924 / JCM 16383 / VKM B-2413 / 1221n) (Desulfurococcus kamchatkensis).